An 84-amino-acid polypeptide reads, in one-letter code: UPF0473 protein CLD_2004 (84 aa).

This sequence belongs to the UPF0473 family.

This Clostridium botulinum (strain Okra / Type B1) protein is UPF0473 protein CLD_2004.